The sequence spans 405 residues: MIPGNRMLMVILLCQVLLGGTNHASLIPETGRKKVAELQGQAGSGRRSAQSHELLRGFETTLLQMFGLRRRPQPSKSAVIPSYMLDLYRLQSGEEEERSLQEISLQYPERSASRANTVRSFHHEEHLESVPGPSEAPRIRFVFNLSSVPDNEVISSEELRLYREQVEEPSAAWERGFHRINIYEVMKPLSERSQAITRLLDTRLVHHNVTRWETFDVSPAVIRWTKDKQPNHGLVIEVTHLHQAQTHQGKHVRISRSLPQGHGGDWAQLRPLLVTFGHDGRGHALTRRARRSPKHHGSRKNKKNCRRHALYVDFSDVGWNDWIVAPPGYQAFYCHGDCPFPLADHLNSTNHAIVQTLVNSVNSSIPKACCVPTELSAISMLYLDEYDKVVLKNYQEMVVEGCGCR.

A signal peptide spans 1–19 (MIPGNRMLMVILLCQVLLG). Positions 20–291 (GTNHASLIPE…GHALTRRARR (272 aa)) are excised as a propeptide. N-linked (GlcNAc...) asparagine glycans are attached at residues N144, N208, N347, and N362. Disulfide bonds link C305–C370, C334–C402, and C338–C404.

This sequence belongs to the TGF-beta family. As to quaternary structure, homodimer; disulfide-linked. Part of a complex consisting of TWSG1 and CHRD. Forms a ternary complex with chordin/CHRD and TSKU.

Its subcellular location is the secreted. Negatively regulates the structure and function of the limb apical ectodermal ridge. The protein is Bone morphogenetic protein 4 (BMP4) of Gallus gallus (Chicken).